Here is a 179-residue protein sequence, read N- to C-terminus: ATP synthase subunit delta (179 aa).

Belongs to the ATPase delta chain family. F-type ATPases have 2 components, F(1) - the catalytic core - and F(0) - the membrane proton channel. F(1) has five subunits: alpha(3), beta(3), gamma(1), delta(1), epsilon(1). F(0) has three main subunits: a(1), b(2) and c(10-14). The alpha and beta chains form an alternating ring which encloses part of the gamma chain. F(1) is attached to F(0) by a central stalk formed by the gamma and epsilon chains, while a peripheral stalk is formed by the delta and b chains.

It localises to the cell inner membrane. Its function is as follows. F(1)F(0) ATP synthase produces ATP from ADP in the presence of a proton or sodium gradient. F-type ATPases consist of two structural domains, F(1) containing the extramembraneous catalytic core and F(0) containing the membrane proton channel, linked together by a central stalk and a peripheral stalk. During catalysis, ATP synthesis in the catalytic domain of F(1) is coupled via a rotary mechanism of the central stalk subunits to proton translocation. In terms of biological role, this protein is part of the stalk that links CF(0) to CF(1). It either transmits conformational changes from CF(0) to CF(1) or is implicated in proton conduction. This Maricaulis maris (strain MCS10) (Caulobacter maris) protein is ATP synthase subunit delta.